Reading from the N-terminus, the 511-residue chain is Cytochrome P450 monooxygenase cypX (511 aa).

The helical transmembrane segment at 18-38 threads the bilayer; it reads LPFSLALVAAAFVLYNIVSII. 2 N-linked (GlcNAc...) asparagine glycosylation sites follow: asparagine 162 and asparagine 407. Cysteine 454 is a binding site for heme.

It belongs to the cytochrome P450 family. Requires heme as cofactor.

The protein localises to the membrane. It participates in mycotoxin biosynthesis. In terms of biological role, cytochrome P450 monooxygenase; part of the fragmented gene cluster that mediates the biosynthesis of dothistromin (DOTH), a polyketide toxin very similar in structure to the aflatoxin precursor, versicolorin B. The first step of the pathway is the conversion of acetate to norsolorinic acid (NOR) and requires the fatty acid synthase subunits hexA and hexB, as well as the polyketide synthase pksA. PksA combines a hexanoyl starter unit and 7 malonyl-CoA extender units to synthesize the precursor NOR. The hexanoyl starter unit is provided to the acyl-carrier protein (ACP) domain by the fungal fatty acid synthase hexA/hexB. The second step is the conversion of NOR to averantin (AVN) and requires the norsolorinic acid ketoreductase nor1, which catalyzes the dehydration of norsolorinic acid to form (1'S)-averantin. The cytochrome P450 monooxygenase avnA then catalyzes the hydroxylation of AVN to 5'hydroxyaverantin (HAVN). The next step is performed by adhA that transforms HAVN to averufin (AVF). Averufin might then be converted to hydroxyversicolorone by cypX and avfA. Hydroxyversicolorone is further converted versiconal hemiacetal acetate (VHA) by moxY. VHA is then the substrate for the versiconal hemiacetal acetate esterase est1 to yield versiconal (VAL). Versicolorin B synthase vbsA then converts VAL to versicolorin B (VERB) by closing the bisfuran ring. Then, the activity of the versicolorin B desaturase verB leads to versicolorin A (VERA). DotB, a predicted chloroperoxidase, may perform epoxidation of the A-ring of VERA. Alternatively, a cytochrome P450, such as cypX or avnA could catalyze this step. It is also possible that another, uncharacterized, cytochrome P450 enzyme is responsible for this step. Opening of the epoxide could potentially be achieved by the epoxide hydrolase epoA. However, epoA seems not to be required for DOTH biosynthesis, but other epoxide hydrolases may have the ability to complement this hydrolysis. Alternatively, opening of the epoxide ring could be achieved non-enzymatically. The next step is the deoxygenation of ring A to yield the 5,8-dihydroxyanthraquinone which is most likely catalyzed by the NADPH dehydrogenase encoded by ver1. The last stages of DOTH biosynthesis are proposed to involve hydroxylation of the bisfuran. OrdB and norB might have oxidative roles here. An alternative possibility is that cytochrome P450 monoogenases such as avnA and cypX might perform these steps in addition to previously proposed steps. The chain is Cytochrome P450 monooxygenase cypX from Dothistroma septosporum (Red band needle blight fungus).